The chain runs to 98 residues: DNA-directed RNA polymerase subunit omega (98 aa).

The protein belongs to the RNA polymerase subunit omega family. In terms of assembly, the RNAP catalytic core consists of 2 alpha, 1 beta, 1 beta' and 1 omega subunit. When a sigma factor is associated with the core the holoenzyme is formed, which can initiate transcription.

It catalyses the reaction RNA(n) + a ribonucleoside 5'-triphosphate = RNA(n+1) + diphosphate. Promotes RNA polymerase assembly. Latches the N- and C-terminal regions of the beta' subunit thereby facilitating its interaction with the beta and alpha subunits. The sequence is that of DNA-directed RNA polymerase subunit omega from Tropheryma whipplei (strain Twist) (Whipple's bacillus).